Reading from the N-terminus, the 279-residue chain is Non-structural maintenance of chromosomes element 3 homolog (279 aa).

The segment at 1–52 (MLQKPRGRGRPSTQADPERDWGGAGEEGPSTSRAAGGSSQGSRASLSAPTVG) is disordered. Residues 30-48 (STSRAAGGSSQGSRASLSA) are compositionally biased toward low complexity. Residue S38 is modified to Phosphoserine. Residues 52-279 (GPRTQKQLEL…ATASAPATSS (228 aa)) are interaction with NSMCE1. The MAGE domain occupies 59 to 259 (LELKVAELVQ…KDWPTQYCEA (201 aa)).

Component of the SMC5-SMC6 complex which consists at least of SMC5, SMC6, NSMCE2, NSMCE1, NSMCE4A or EID3 and NSMCE3. NSMCE1, NSMCE4A or EID3 and NSMCE3 probably form a subcomplex that bridges the head domains of the SMC5:SMC6 heterodimer. Interacts with PJA1. Interacts with E2F1 (via C-terminus). Interacts with NGFR (via C-terminus). Interacts with NSMCE1. Interacts with NSMCE4. Interacts with SMC6. Interacts with EID3. Ubiquitous.

It is found in the cytoplasm. Its subcellular location is the nucleus. The protein resides in the chromosome. The protein localises to the telomere. Its function is as follows. Component of the SMC5-SMC6 complex, a complex involved in repair of DNA double-strand breaks by homologous recombination. The complex may promote sister chromatid homologous recombination by recruiting the SMC1-SMC3 cohesin complex to double-strand breaks. The complex is required for telomere maintenance via recombination in ALT (alternative lengthening of telomeres) cell lines and mediates sumoylation of shelterin complex (telosome) components which is proposed to lead to shelterin complex disassembly in ALT-associated PML bodies (APBs). In vitro enhances ubiquitin ligase activity of NSMCE1. Proposed to act through recruitment and/or stabilization of the Ubl-conjugating enzyme (E2) at the E3:substrate complex. May be a growth suppressor that facilitates the entry of the cell into cell cycle arrest. In Mus musculus (Mouse), this protein is Non-structural maintenance of chromosomes element 3 homolog (Nsmce3).